The chain runs to 407 residues: Indoleamine 2,3-dioxygenase 1 (407 aa).

Histidine 350 serves as a coordination point for heme b. Residues 362 to 388 are disordered; sequence SKQKPMGGHKSEEPSNTENRGTGGTDV.

Belongs to the indoleamine 2,3-dioxygenase family. Monomer. Heme b serves as cofactor.

The protein localises to the cytoplasm. It localises to the cytosol. The catalysed reaction is D-tryptophan + O2 = N-formyl-D-kynurenine. The enzyme catalyses L-tryptophan + O2 = N-formyl-L-kynurenine. With respect to regulation, activity is inhibited by and MTH-trp (methylthiohydantoin-DL-tryptophan), modestly inhibited by L-1MT (1-methyl-L-tryptophan) but not D-1MT (1-methyl-D-tryptophan). In terms of biological role, catalyzes the first and rate limiting step of the catabolism of the essential amino acid tryptophan along the kynurenine pathway. Involved in the peripheral immune tolerance, contributing to maintain homeostasis by preventing autoimmunity or immunopathology that would result from uncontrolled and overreacting immune responses. Tryptophan shortage inhibits T lymphocytes division and accumulation of tryptophan catabolites induces T-cell apoptosis and differentiation of regulatory T-cells. Acts as a suppressor of anti-tumor immunity. Limits the growth of intracellular pathogens by depriving tryptophan. Protects the fetus from maternal immune rejection. The chain is Indoleamine 2,3-dioxygenase 1 from Rattus norvegicus (Rat).